We begin with the raw amino-acid sequence, 295 residues long: Glutamyl-Q tRNA(Asp) synthetase (295 aa).

L-glutamate is bound by residues 6-10 (RFAPS) and E42. The short motif at 9–19 (PSPTGAMHLGN) is the 'HIGH' region element. Residues C93, C95, Y118, and C122 each coordinate Zn(2+). L-glutamate-binding residues include Y177 and R195. The 'KMSKS' region motif lies at 233–237 (RLAKR). K236 provides a ligand contact to ATP.

It belongs to the class-I aminoacyl-tRNA synthetase family. GluQ subfamily. Zn(2+) is required as a cofactor.

Catalyzes the tRNA-independent activation of glutamate in presence of ATP and the subsequent transfer of glutamate onto a tRNA(Asp). Glutamate is transferred on the 2-amino-5-(4,5-dihydroxy-2-cyclopenten-1-yl) moiety of the queuosine in the wobble position of the QUC anticodon. In Deinococcus radiodurans (strain ATCC 13939 / DSM 20539 / JCM 16871 / CCUG 27074 / LMG 4051 / NBRC 15346 / NCIMB 9279 / VKM B-1422 / R1), this protein is Glutamyl-Q tRNA(Asp) synthetase.